The sequence spans 248 residues: Adenosylcobinamide-GDP ribazoletransferase (248 aa).

A run of 6 helical transmembrane segments spans residues 36–56 (FFLP…YLGL), 59–79 (FLPS…ITGG), 114–134 (GTIA…SLVL), 137–157 (YSIA…FLCL), 170–190 (IFIG…VLVL), and 199–219 (ATII…LLCL).

Belongs to the CobS family. Requires Mg(2+) as cofactor.

It is found in the cell membrane. The enzyme catalyses alpha-ribazole + adenosylcob(III)inamide-GDP = adenosylcob(III)alamin + GMP + H(+). It catalyses the reaction alpha-ribazole 5'-phosphate + adenosylcob(III)inamide-GDP = adenosylcob(III)alamin 5'-phosphate + GMP + H(+). Its pathway is cofactor biosynthesis; adenosylcobalamin biosynthesis; adenosylcobalamin from cob(II)yrinate a,c-diamide: step 7/7. Its function is as follows. Joins adenosylcobinamide-GDP and alpha-ribazole to generate adenosylcobalamin (Ado-cobalamin). Also synthesizes adenosylcobalamin 5'-phosphate from adenosylcobinamide-GDP and alpha-ribazole 5'-phosphate. This Clostridium botulinum (strain Loch Maree / Type A3) protein is Adenosylcobinamide-GDP ribazoletransferase.